The chain runs to 407 residues: Imidazolonepropionase (407 aa).

Fe(3+) is bound by residues His-75 and His-77. Zn(2+)-binding residues include His-75 and His-77. Residues Arg-84, Tyr-142, and His-169 each contribute to the 4-imidazolone-5-propanoate site. Tyr-142 contributes to the N-formimidoyl-L-glutamate binding site. His-232 lines the Fe(3+) pocket. His-232 contacts Zn(2+). Gln-235 is a 4-imidazolone-5-propanoate binding site. Asp-306 contacts Fe(3+). Asp-306 contributes to the Zn(2+) binding site. The N-formimidoyl-L-glutamate site is built by Asn-308 and Gly-310. Thr-311 serves as a coordination point for 4-imidazolone-5-propanoate.

It belongs to the metallo-dependent hydrolases superfamily. HutI family. The cofactor is Zn(2+). Fe(3+) serves as cofactor.

It is found in the cytoplasm. The catalysed reaction is 4-imidazolone-5-propanoate + H2O = N-formimidoyl-L-glutamate. It participates in amino-acid degradation; L-histidine degradation into L-glutamate; N-formimidoyl-L-glutamate from L-histidine: step 3/3. Functionally, catalyzes the hydrolytic cleavage of the carbon-nitrogen bond in imidazolone-5-propanoate to yield N-formimidoyl-L-glutamate. It is the third step in the universal histidine degradation pathway. The sequence is that of Imidazolonepropionase from Rhodococcus jostii (strain RHA1).